Consider the following 980-residue polypeptide: Exportin-T (980 aa).

This sequence belongs to the exportin family. As to expression, expressed in roots, stems, leaves, flowers and embryos.

It localises to the nucleus. The protein localises to the cytoplasm. Probable tRNA nucleus export receptor which regulates tRNA processing and facilitates tRNA translocation across the nuclear pore complex. Is required for correct leaf initiation at different developmental stages and may play a role in floral patterning. The polypeptide is Exportin-T (Oryza sativa subsp. japonica (Rice)).